The following is a 368-amino-acid chain: Metacaspase-6 (368 aa).

Catalysis depends on residues His86 and Cys139. Cys139 is modified (S-nitrosocysteine). Residues Gly153–Ala174 are disordered.

It belongs to the peptidase C14B family. In terms of processing, proteolytically processed; by an autocatalytic mechanism. Expressed in roots and flower buds.

This Arabidopsis thaliana (Mouse-ear cress) protein is Metacaspase-6 (AMC6).